Consider the following 97-residue polypeptide: uncharacterized protein (97 aa).

This is an uncharacterized protein from Alcelaphine herpesvirus 1 (strain C500) (AlHV-1).